Here is a 143-residue protein sequence, read N- to C-terminus: Transcriptional regulator MraZ (143 aa).

2 SpoVT-AbrB domains span residues 5 to 47 and 76 to 119; these read SHTP…PMAE and AADD…DAQR.

Belongs to the MraZ family. As to quaternary structure, forms oligomers.

The protein localises to the cytoplasm. It localises to the nucleoid. This chain is Transcriptional regulator MraZ, found in Frankia alni (strain DSM 45986 / CECT 9034 / ACN14a).